The following is a 269-amino-acid chain: Regulatory protein RecX (269 aa).

Belongs to the RecX family.

It is found in the cytoplasm. Modulates RecA activity. The protein is Regulatory protein RecX of Lactococcus lactis subsp. cremoris (strain MG1363).